Here is a 151-residue protein sequence, read N- to C-terminus: Minor curlin subunit (151 aa).

Positions 1–21 are cleaved as a signal peptide; it reads MKNKLLFMMLTILGAPGIATA.

Belongs to the CsgA/CsgB family.

Its subcellular location is the fimbrium. Functionally, curlin is the structural subunit of the curli. Curli are coiled surface structures that assemble preferentially at growth temperatures below 37 degrees Celsius. Curli can bind to fibronectin. The minor subunit is the nucleation component of curlin monomers. This chain is Minor curlin subunit (csgB), found in Salmonella typhi.